A 278-amino-acid chain; its full sequence is Large ribosomal subunit protein uL2 (278 aa).

Residues 202 to 278 (ANINDGKAGR…IMRSRHQRKK (77 aa)) form a disordered region.

Belongs to the universal ribosomal protein uL2 family. As to quaternary structure, part of the 50S ribosomal subunit. Forms a bridge to the 30S subunit in the 70S ribosome.

One of the primary rRNA binding proteins. Required for association of the 30S and 50S subunits to form the 70S ribosome, for tRNA binding and peptide bond formation. It has been suggested to have peptidyltransferase activity; this is somewhat controversial. Makes several contacts with the 16S rRNA in the 70S ribosome. The chain is Large ribosomal subunit protein uL2 from Rhizobium johnstonii (strain DSM 114642 / LMG 32736 / 3841) (Rhizobium leguminosarum bv. viciae).